A 274-amino-acid chain; its full sequence is tRNA pseudouridine synthase A (274 aa).

The active-site Nucleophile is the aspartate 52. Tyrosine 110 provides a ligand contact to substrate.

Belongs to the tRNA pseudouridine synthase TruA family. In terms of assembly, homodimer.

It catalyses the reaction uridine(38/39/40) in tRNA = pseudouridine(38/39/40) in tRNA. In terms of biological role, formation of pseudouridine at positions 38, 39 and 40 in the anticodon stem and loop of transfer RNAs. The protein is tRNA pseudouridine synthase A of Ralstonia nicotianae (strain ATCC BAA-1114 / GMI1000) (Ralstonia solanacearum).